The chain runs to 20 residues: Ribulose bisphosphate carboxylase small subunit (20 aa).

This sequence belongs to the RuBisCO small chain family. As to quaternary structure, heterohexadecamer of 8 large and 8 small subunits.

It is found in the plastid. The protein localises to the chloroplast. RuBisCO catalyzes two reactions: the carboxylation of D-ribulose 1,5-bisphosphate, the primary event in carbon dioxide fixation, as well as the oxidative fragmentation of the pentose substrate in the photorespiration process. Both reactions occur simultaneously and in competition at the same active site. Although the small subunit is not catalytic it is essential for maximal activity. The polypeptide is Ribulose bisphosphate carboxylase small subunit (Chattonella marina var. antiqua (Red tide flagellate)).